A 143-amino-acid chain; its full sequence is Large-conductance mechanosensitive channel (143 aa).

Transmembrane regions (helical) follow at residues 10-30 (FAVK…GAFS) and 89-109 (GSFI…FLMV).

The protein belongs to the MscL family. Homopentamer.

Its subcellular location is the cell inner membrane. Its function is as follows. Channel that opens in response to stretch forces in the membrane lipid bilayer. May participate in the regulation of osmotic pressure changes within the cell. This chain is Large-conductance mechanosensitive channel, found in Burkholderia cenocepacia (strain ATCC BAA-245 / DSM 16553 / LMG 16656 / NCTC 13227 / J2315 / CF5610) (Burkholderia cepacia (strain J2315)).